The chain runs to 205 residues: Glycerol-3-phosphate acyltransferase (205 aa).

A run of 5 helical transmembrane segments spans residues isoleucine 4–valine 24, proline 80–phenylalanine 100, glycine 107–alanine 127, tryptophan 130–isoleucine 150, and valine 155–leucine 175.

This sequence belongs to the PlsY family. As to quaternary structure, probably interacts with PlsX.

The protein resides in the cell inner membrane. It carries out the reaction an acyl phosphate + sn-glycerol 3-phosphate = a 1-acyl-sn-glycero-3-phosphate + phosphate. It functions in the pathway lipid metabolism; phospholipid metabolism. Functionally, catalyzes the transfer of an acyl group from acyl-phosphate (acyl-PO(4)) to glycerol-3-phosphate (G3P) to form lysophosphatidic acid (LPA). This enzyme utilizes acyl-phosphate as fatty acyl donor, but not acyl-CoA or acyl-ACP. This Klebsiella pneumoniae subsp. pneumoniae (strain ATCC 700721 / MGH 78578) protein is Glycerol-3-phosphate acyltransferase.